The primary structure comprises 187 residues: Elongation factor P (187 aa).

Position 34 is an N6-(3,6-diaminohexanoyl)-5-hydroxylysine (Lys34).

Belongs to the elongation factor P family. Post-translationally, may be beta-lysylated on the epsilon-amino group of Lys-34 by the combined action of EpmA and EpmB, and then hydroxylated on the C5 position of the same residue by EpmC (if this protein is present). Lysylation is critical for the stimulatory effect of EF-P on peptide-bond formation. The lysylation moiety may extend toward the peptidyltransferase center and stabilize the terminal 3-CCA end of the tRNA. Hydroxylation of the C5 position on Lys-34 may allow additional potential stabilizing hydrogen-bond interactions with the P-tRNA.

It localises to the cytoplasm. It functions in the pathway protein biosynthesis; polypeptide chain elongation. Functionally, involved in peptide bond synthesis. Alleviates ribosome stalling that occurs when 3 or more consecutive Pro residues or the sequence PPG is present in a protein, possibly by augmenting the peptidyl transferase activity of the ribosome. Modification of Lys-34 is required for alleviation. The protein is Elongation factor P of Buchnera aphidicola subsp. Schizaphis graminum (strain Sg).